Consider the following 365-residue polypeptide: Serine/threonine-protein phosphatase 2A activator 1 (365 aa).

The interval 321–349 is disordered; it reads YEAPSETSEKPAAGTAHTTTTTMPPPRMT. Residues 331-342 show a composition bias toward low complexity; sequence PAAGTAHTTTTT.

Belongs to the PTPA-type PPIase family.

It localises to the cytoplasm. It is found in the nucleus. It carries out the reaction [protein]-peptidylproline (omega=180) = [protein]-peptidylproline (omega=0). In terms of biological role, PPIases accelerate the folding of proteins. It catalyzes the cis-trans isomerization of proline imidic peptide bonds in oligopeptides. Acts as a regulatory subunit for PP2A-like phosphatases modulating their activity or substrate specificity, probably by inducing a conformational change in the catalytic subunit, a direct target of the PPIase. Can reactivate inactive phosphatase PP2A-phosphatase methylesterase complexes (PP2Ai) in presence of ATP and Mg(2+) by dissociating the inactive form from the complex. In Eremothecium gossypii (strain ATCC 10895 / CBS 109.51 / FGSC 9923 / NRRL Y-1056) (Yeast), this protein is Serine/threonine-protein phosphatase 2A activator 1 (RRD1).